Consider the following 87-residue polypeptide: Protein anon-73B1 (87 aa).

Residues 25-47 (LLIRYGLYVGALFQFVCISAAVL) traverse the membrane as a helical segment. Residues 50–87 (NNPDSQSNPETGEVTEREGEPVRTRLHKIRKLEKKKRR) are disordered. A compositionally biased stretch (basic and acidic residues) spans 63–72 (VTEREGEPVR). Residues 73–87 (TRLHKIRKLEKKKRR) show a composition bias toward basic residues.

Belongs to the UPF0239 family.

It is found in the membrane. In Drosophila simulans (Fruit fly), this protein is Protein anon-73B1 (anon-73B1).